Reading from the N-terminus, the 554-residue chain is 3-(3-hydroxy-phenyl)propionate/3-hydroxycinnamic acid hydroxylase (554 aa).

Residues 17–46 and 285–295 contribute to the FAD site; these read QVAI…VVEK and FRINRVLLAGD.

This sequence belongs to the PheA/TfdB FAD monooxygenase family. The cofactor is FAD.

It carries out the reaction 3-(3-hydroxyphenyl)propanoate + NADH + O2 + H(+) = 3-(2,3-dihydroxyphenyl)propanoate + NAD(+) + H2O. The enzyme catalyses (2E)-3-(3-hydroxyphenyl)prop-2-enoate + NADH + O2 + H(+) = (2E)-3-(2,3-dihydroxyphenyl)prop-2-enoate + NAD(+) + H2O. The protein operates within aromatic compound metabolism; 3-phenylpropanoate degradation. In terms of biological role, catalyzes the insertion of one atom of molecular oxygen into position 2 of the phenyl ring of 3-(3-hydroxyphenyl)propionate (3-HPP) and hydroxycinnamic acid (3HCI). The sequence is that of 3-(3-hydroxy-phenyl)propionate/3-hydroxycinnamic acid hydroxylase from Klebsiella pneumoniae subsp. pneumoniae (strain ATCC 700721 / MGH 78578).